A 285-amino-acid chain; its full sequence is Vacuolar protein sorting-associated protein 37B (285 aa).

The interval 50-170 (ASNRSLAEGN…EMVLKGQRLP (121 aa)) is interaction with IST1. Residues 84-173 (FEAYQIKKTK…LKGQRLPQAL (90 aa)) form the VPS37 C-terminal domain. A disordered region spans residues 175 to 201 (PLPPRLPELAPTAPLPYPAPEASGPPA). Arg-218 carries the omega-N-methylarginine modification. Residues 230-285 (GQAVPYPGLQCPPLPPRVGLPTQQGFSSQFVSPYPPPLPQRPPPRLPPHQPGFILQ) form a disordered region. Residues 250-260 (PTQQGFSSQFV) show a composition bias toward polar residues. Positions 262–279 (PYPPPLPQRPPPRLPPHQ) are enriched in pro residues.

Belongs to the VPS37 family. Component of the ESCRT-I complex (endosomal sorting complex required for transport I) which consists of TSG101, VPS28, a VPS37 protein (VPS37A to -D) and MVB12A or MVB12B in a 1:1:1:1 stoichiometry. Interacts with TSG101, VPS28, MVB12A and MVB12B. Component of the ESCRT-I complex (endosomal sorting complex required for transport I) which consists of TSG101, VPS28, a VPS37 protein (VPS37A to -D) and UBAP1 in a 1:1:1:1 stoichiometry. Interacts with CEP55. Interacts with IST1. As to expression, widely expressed. Expressed in macrophages and lymphocytes.

It localises to the late endosome membrane. Functionally, component of the ESCRT-I complex, a regulator of vesicular trafficking process. Required for the sorting of endocytic ubiquitinated cargos into multivesicular bodies. May be involved in cell growth and differentiation. The sequence is that of Vacuolar protein sorting-associated protein 37B (VPS37B) from Homo sapiens (Human).